Here is a 481-residue protein sequence, read N- to C-terminus: Ribosomal protein uS12 methylthiotransferase RimO (481 aa).

An MTTase N-terminal domain is found at 38-148 (NRIGFVSLGC…VLKHVHKYVP (111 aa)). [4Fe-4S] cluster contacts are provided by cysteine 47, cysteine 83, cysteine 112, cysteine 180, cysteine 184, and cysteine 187. A Radical SAM core domain is found at 166 to 403 (LTPKHYAYLK…MEVQAEISAE (238 aa)). Residues 406 to 472 (ARFVGRTMDI…EHDLWAELVD (67 aa)) form the TRAM domain.

The protein belongs to the methylthiotransferase family. RimO subfamily. The cofactor is [4Fe-4S] cluster.

Its subcellular location is the cytoplasm. It carries out the reaction L-aspartate(89)-[ribosomal protein uS12]-hydrogen + (sulfur carrier)-SH + AH2 + 2 S-adenosyl-L-methionine = 3-methylsulfanyl-L-aspartate(89)-[ribosomal protein uS12]-hydrogen + (sulfur carrier)-H + 5'-deoxyadenosine + L-methionine + A + S-adenosyl-L-homocysteine + 2 H(+). Catalyzes the methylthiolation of an aspartic acid residue of ribosomal protein uS12. The polypeptide is Ribosomal protein uS12 methylthiotransferase RimO (Shewanella oneidensis (strain ATCC 700550 / JCM 31522 / CIP 106686 / LMG 19005 / NCIMB 14063 / MR-1)).